We begin with the raw amino-acid sequence, 337 residues long: Nicotinate-nucleotide--dimethylbenzimidazole phosphoribosyltransferase (337 aa).

Residue glutamate 305 is the Proton acceptor of the active site.

This sequence belongs to the CobT family.

It catalyses the reaction 5,6-dimethylbenzimidazole + nicotinate beta-D-ribonucleotide = alpha-ribazole 5'-phosphate + nicotinate + H(+). It participates in nucleoside biosynthesis; alpha-ribazole biosynthesis; alpha-ribazole from 5,6-dimethylbenzimidazole: step 1/2. Its function is as follows. Catalyzes the synthesis of alpha-ribazole-5'-phosphate from nicotinate mononucleotide (NAMN) and 5,6-dimethylbenzimidazole (DMB). The chain is Nicotinate-nucleotide--dimethylbenzimidazole phosphoribosyltransferase from Jannaschia sp. (strain CCS1).